A 238-amino-acid polypeptide reads, in one-letter code: Arginine ABC transporter permease protein ArtQ (238 aa).

The Periplasmic segment spans residues 1 to 14; the sequence is MNEFFPLASAAGMT. The ABC transmembrane type-1 domain maps to 11 to 223; that stretch reads AGMTVGLAVC…VITLLSQYIL (213 aa). A helical membrane pass occupies residues 15 to 35; it reads VGLAVCALIVGLALAMFFAVW. At 36-48 the chain is on the cytoplasmic side; that stretch reads ESAKWRPVAWAGS. A helical membrane pass occupies residues 49–69; sequence ALVTILRGLPEILVVLFIYFG. Residues 70–98 lie on the Periplasmic side of the membrane; that stretch reads SSQLLLTLSDGFTINLGFVQIPVQMDIEN. Residues 99 to 119 form a helical membrane-spanning segment; that stretch reads FDVSPFLCGVIALSLLYAAYA. Residues 120–168 are Cytoplasmic-facing; the sequence is SQTLRGALKAVPVGQWESGQALGLSKSAIFFRLVMPQMWRHALPGLGNQ. Residues 169 to 189 form a helical membrane-spanning segment; the sequence is WLVLLKDTALVSLISVNDLML. At 190–201 the chain is on the periplasmic side; the sequence is QTKSIATRTQEP. The chain crosses the membrane as a helical span at residues 202–222; that stretch reads FTWYIVAAAIYLVITLLSQYI. The Cytoplasmic portion of the chain corresponds to 223-238; the sequence is LKRIDLRATRFERRPS.

The protein belongs to the binding-protein-dependent transport system permease family. HisMQ subfamily. The complex is composed of two ATP-binding proteins (ArtP), two transmembrane proteins (ArtM and ArtQ) and two solute-binding proteins (ArtJ and ArtI).

The protein resides in the cell inner membrane. Its function is as follows. Part of the ABC transporter complex ArtPIQMJ involved in arginine transport. Probably responsible for the translocation of the substrate across the membrane. The protein is Arginine ABC transporter permease protein ArtQ (artQ) of Escherichia coli O6:H1 (strain CFT073 / ATCC 700928 / UPEC).